An 818-amino-acid chain; its full sequence is Sodium/hydrogen exchanger 1 (818 aa).

Over 1 to 98 the chain is Extracellular; the sequence is MLLWSGICGL…FPVLGIDYTH (98 aa). The disordered stretch occupies residues 39–76; the sequence is PSPTASTIRGSEPPRERSIGDVTTAPPELAPESRPVNH. N-linked (GlcNAc...) asparagine glycosylation occurs at asparagine 75. Residues 99 to 121 form a helical membrane-spanning segment; the sequence is VRTPFEISLWILLACLMKIGFHV. The Cytoplasmic segment spans residues 122–130; that stretch reads IPTISSIVP. The helical transmembrane segment at 131–148 threads the bilayer; that stretch reads ESCLLIVVGLLVGGLIKA. Topologically, residues 149–158 are extracellular; the sequence is VGETPPFLQS. A helical transmembrane segment spans residues 159–176; that stretch reads EVFFLFLLPPIILDAGYF. The Cytoplasmic portion of the chain corresponds to 177-186; the sequence is LPLRQFTENL. The helical transmembrane segment at 187–215 threads the bilayer; sequence GTILIFAVVGTLWNAFFLGGLMYAVCLVG. Residues 216-222 lie on the Extracellular side of the membrane; sequence GEQINNI. A helical membrane pass occupies residues 223-249; the sequence is GLLDNLLFGSIISAVDPVAVLAVFEEI. Over 250–252 the chain is Cytoplasmic; that stretch reads HIN. Residues 253-283 traverse the membrane as a helical segment; it reads ELLHILVFGESLLNDAVTVVLYHLFEEFANY. Residues 284 to 287 are Extracellular-facing; it reads DRVG. A helical transmembrane segment spans residues 288–322; that stretch reads IVDIVLGFLSFFVVSLGGVFVGVVYGVIAAFTSRF. Topologically, residues 323–328 are cytoplasmic; sequence TSHIRV. A helical transmembrane segment spans residues 329-341; that stretch reads IEPLFVFLYSYMA. The Extracellular portion of the chain corresponds to 342-350; that stretch reads YLSAELFHL. The helical transmembrane segment at 351-371 threads the bilayer; sequence SGIMALIASGVVMRPYVEANI. Topologically, residues 372–373 are cytoplasmic; it reads SH. Residues 374 to 404 traverse the membrane as a helical segment; sequence KSHTTIKYFLKMWSSVSETLIFIFLGVSTVA. Residues 405 to 410 lie on the Extracellular side of the membrane; the sequence is GSHHWN. A helical transmembrane segment spans residues 411–438; sequence WTFVISTLLFCLIARVLGVLGLTWFINK. Residues 439–444 lie on the Cytoplasmic side of the membrane; sequence FRIVKL. A helical membrane pass occupies residues 445 to 469; sequence TPKDQFIIAYGGLRGAIAFSLGHLL. Over 470-475 the chain is Extracellular; it reads DKNHFP. The helical transmembrane segment at 476–505 threads the bilayer; the sequence is MCDLFLTAIITVIFFTVFVQGMTIRPLVDL. The tract at residues 503–545 is interaction with TESC; that stretch reads VDLLAVKKKQETKRSINEEIHTQFLDHLLTGIEDICGHYGHHH. The Cytoplasmic portion of the chain corresponds to 506–818; it reads LAVKKKQETK…EGEPFIPKGQ (313 aa). Residues 509–516 form a PI(4,5)P2-binding region region; sequence KKKQETKR. An interaction with CHP2 region spans residues 515-545; sequence KRSINEEIHTQFLDHLLTGIEDICGHYGHHH. The interval 540–545 is confers pH-dependent PI(4,5)P2 binding; that stretch reads HYGHHH. The interval 552–560 is PI(4,5)P2-binding region; sequence RFNKKYVKK. A phosphoserine mark is found at serine 599 and serine 602. At threonine 603 the chain carries Phosphothreonine. Phosphoserine occurs at positions 605 and 648. The interval 633 to 818 is interaction with TESC; the sequence is KILRNNLQKT…EGEPFIPKGQ (186 aa). The segment at 633–818 is interaction with CALM1; it reads KILRNNLQKT…EGEPFIPKGQ (186 aa). The tract at residues 684–687 is interaction with PPP3CA; sequence LTVP. 3 positions are modified to phosphoserine: serine 693, serine 697, and serine 703. The tract at residues 715-720 is interaction with PPP3CA; sequence PVITID. Phosphoserine is present on residues serine 723, serine 726, and serine 729. The interval 739–818 is disordered; the sequence is GKVLGLSREP…EGEPFIPKGQ (80 aa). 2 positions are modified to phosphothreonine: threonine 752 and threonine 782. A compositionally biased stretch (polar residues) spans 785–794; sequence PSDSPSSQRI. Serine 788, serine 790, and serine 799 each carry phosphoserine.

It belongs to the monovalent cation:proton antiporter 1 (CPA1) transporter (TC 2.A.36) family. As to quaternary structure, homodimer; dimerization is crucial for its function. Oligomer. Interacts with CALM in a calcium-dependent manner. Interacts with TESC. Interacts (via the juxtamembrane region of the cytoplasmic C-terminal domain) with CHP1; the interaction occurs at the plasma membrane in a calcium-dependent manner. Interacts with CHP2; the interaction occurs in a calcium-dependent manner. Interacts with EZR; regulates the cytoskeletal interactions of SLC9A1 and promotes stress fiber formation. In terms of processing, ubiquitinated, leading to its degradation by the proteasome. Ubiquitination is reduced by CHP1. O-glycosylated. Post-translationally, palmitoylated; may play a major role in SLC9A1 regulation. In terms of processing, phosphorylation at Thr-782 increases SLC9A1 activity. Specifically dephosphorylated at Thr-782 by PPP3CA that negatively regulates SLC9A1 activity. Phosphorylation at Ser-648 by AKT1 reduces SLC9A1 binding to CALM1.

The protein resides in the cell membrane. Its subcellular location is the basolateral cell membrane. It catalyses the reaction Na(+)(in) + H(+)(out) = Na(+)(out) + H(+)(in). The enzyme catalyses Li(+)(out) + H(+)(in) = Li(+)(in) + H(+)(out). The catalysed reaction is Li(+)(in) + Na(+)(out) = Li(+)(out) + Na(+)(in). With respect to regulation, activated at acidic pHs. Inhibited by cariporide and eniporide. Inhibited by amiloride and 5-amino-substituted derivatives. Phosphatidylinositol 4,5-bisphosphate (PI(4,5)P2) and phosphatidylinositol 3,4,5-trisphosphate (PI(3,4,5)P3) bind and differentially regulate SLC9A1 activity. Functionally, electroneutral Na(+) /H(+) antiporter that extrudes Na(+) in exchange for external protons driven by the inward sodium ion chemical gradient, protecting cells from acidification that occurs from metabolism. Exchanges intracellular H(+) ions for extracellular Na(+) in 1:1 stoichiometry. Plays a key role in maintening intracellular pH neutral and cell volume, and thus is important for cell growth, proliferation, migration and survival. In addition, can transport lithium Li(+) and also functions as a Na(+)/Li(+) antiporter. SLC9A1 also functions in membrane anchoring and organization of scaffolding complexes that coordinate signaling inputs. The protein is Sodium/hydrogen exchanger 1 (SLC9A1) of Sus scrofa (Pig).